Reading from the N-terminus, the 355-residue chain is Protein pelota homolog (355 aa).

Belongs to the eukaryotic release factor 1 family. Pelota subfamily. In terms of assembly, monomer. A divalent metal cation serves as cofactor.

It localises to the cytoplasm. May function in recognizing stalled ribosomes, interact with stem-loop structures in stalled mRNA molecules, and effect endonucleolytic cleavage of the mRNA. May play a role in the release non-functional ribosomes and degradation of damaged mRNAs. Has endoribonuclease activity. In Natronomonas pharaonis (strain ATCC 35678 / DSM 2160 / CIP 103997 / JCM 8858 / NBRC 14720 / NCIMB 2260 / Gabara) (Halobacterium pharaonis), this protein is Protein pelota homolog.